The chain runs to 1147 residues: Lon protease homolog 2, peroxisomal (1147 aa).

One can recognise a Lon N-terminal domain in the interval 20–348; that stretch reads LPTYKLDSNL…EVNRMLESMI (329 aa). Disordered regions lie at residues 395-444 and 561-626; these read KPDK…DDDD and KIES…SLTT. Residues 427 to 444 show a composition bias toward acidic residues; sequence DGNESNDEYDDDEDDDDD. Composition is skewed to basic and acidic residues over residues 561-574 and 582-597; these read KIES…KKNE and KNDK…RSDD. 651 to 658 provides a ligand contact to ATP; the sequence is GPPGTGKT. The region spanning 903 to 1131 is the Lon proteolytic domain; that stretch reads SAKCGVVNGL…WDVIKAVWGD (229 aa). Residues Ser1006 and Lys1049 contribute to the active site.

Belongs to the peptidase S16 family.

It localises to the peroxisome matrix. The catalysed reaction is Hydrolysis of proteins in presence of ATP.. In terms of biological role, ATP-dependent serine protease that mediates the selective degradation of misfolded and unassembled polypeptides in the peroxisomal matrix. Necessary for type 2 peroxisome targeting signal (PTS2)-containing protein processing and facilitates peroxisome matrix protein import. This chain is Lon protease homolog 2, peroxisomal, found in Debaryomyces hansenii (strain ATCC 36239 / CBS 767 / BCRC 21394 / JCM 1990 / NBRC 0083 / IGC 2968) (Yeast).